A 410-amino-acid polypeptide reads, in one-letter code: Aspartate aminotransferase (410 aa).

Gly47, Trp135, and Asn185 together coordinate L-aspartate. Position 249 is an N6-(pyridoxal phosphate)lysine (Lys249). Position 385 (Arg385) interacts with L-aspartate.

Belongs to the class-I pyridoxal-phosphate-dependent aminotransferase family. In terms of assembly, homodimer. Pyridoxal 5'-phosphate serves as cofactor.

Its subcellular location is the cytoplasm. The catalysed reaction is L-aspartate + 2-oxoglutarate = oxaloacetate + L-glutamate. Catalyzes the reversible conversion of aspartate and 2-oxoglutarate to glutamate and oxaloacetate. The protein is Aspartate aminotransferase of Rhizobium meliloti (Ensifer meliloti).